The chain runs to 378 residues: Biotin synthase (378 aa).

The Radical SAM core domain occupies 68 to 292 (NEVQISTLLS…IAVTRICCPS (225 aa)). Residues cysteine 83, cysteine 87, and cysteine 90 each contribute to the [4Fe-4S] cluster site. [2Fe-2S] cluster contacts are provided by cysteine 129, cysteine 160, cysteine 220, and arginine 296.

It belongs to the radical SAM superfamily. Biotin synthase family. In terms of assembly, homodimer. [4Fe-4S] cluster is required as a cofactor. [2Fe-2S] cluster serves as cofactor.

It carries out the reaction (4R,5S)-dethiobiotin + (sulfur carrier)-SH + 2 reduced [2Fe-2S]-[ferredoxin] + 2 S-adenosyl-L-methionine = (sulfur carrier)-H + biotin + 2 5'-deoxyadenosine + 2 L-methionine + 2 oxidized [2Fe-2S]-[ferredoxin]. The protein operates within cofactor biosynthesis; biotin biosynthesis; biotin from 7,8-diaminononanoate: step 2/2. In terms of biological role, catalyzes the conversion of dethiobiotin (DTB) to biotin by the insertion of a sulfur atom into dethiobiotin via a radical-based mechanism. The chain is Biotin synthase from Psychrobacter arcticus (strain DSM 17307 / VKM B-2377 / 273-4).